The following is a 375-amino-acid chain: Succinyl-diaminopimelate desuccinylase (375 aa).

Zn(2+) is bound at residue His66. Residue Asp68 is part of the active site. Asp99 contacts Zn(2+). Residue Glu133 is the Proton acceptor of the active site. The Zn(2+) site is built by Glu134, Glu162, and His348.

The protein belongs to the peptidase M20A family. DapE subfamily. Homodimer. Zn(2+) serves as cofactor. Requires Co(2+) as cofactor.

The enzyme catalyses N-succinyl-(2S,6S)-2,6-diaminopimelate + H2O = (2S,6S)-2,6-diaminopimelate + succinate. It participates in amino-acid biosynthesis; L-lysine biosynthesis via DAP pathway; LL-2,6-diaminopimelate from (S)-tetrahydrodipicolinate (succinylase route): step 3/3. Its function is as follows. Catalyzes the hydrolysis of N-succinyl-L,L-diaminopimelic acid (SDAP), forming succinate and LL-2,6-diaminopimelate (DAP), an intermediate involved in the bacterial biosynthesis of lysine and meso-diaminopimelic acid, an essential component of bacterial cell walls. This is Succinyl-diaminopimelate desuccinylase from Aeromonas hydrophila subsp. hydrophila (strain ATCC 7966 / DSM 30187 / BCRC 13018 / CCUG 14551 / JCM 1027 / KCTC 2358 / NCIMB 9240 / NCTC 8049).